We begin with the raw amino-acid sequence, 208 residues long: Peptide deformylase 3 (208 aa).

2 residues coordinate Fe cation: Cys120 and His162. Residue Glu163 is part of the active site. Residue His166 coordinates Fe cation.

It belongs to the polypeptide deformylase family. The cofactor is Fe(2+).

The catalysed reaction is N-terminal N-formyl-L-methionyl-[peptide] + H2O = N-terminal L-methionyl-[peptide] + formate. Removes the formyl group from the N-terminal Met of newly synthesized proteins. Requires at least a dipeptide for an efficient rate of reaction. N-terminal L-methionine is a prerequisite for activity but the enzyme has broad specificity at other positions. The polypeptide is Peptide deformylase 3 (Streptomyces coelicolor (strain ATCC BAA-471 / A3(2) / M145)).